Reading from the N-terminus, the 180-residue chain is Der GTPase-activating protein YihI (180 aa).

2 disordered regions span residues 1–90 and 145–180; these read MSRK…QERR and EPEEDEDFTAPAVKGSRNDDDLLADFDDINFDDYKG. Over residues 23-32 the composition is skewed to basic and acidic residues; it reads NRTESDVEGR. The span at 33-43 shows a compositional bias: basic residues; the sequence is LRKRAKKRKGL. Composition is skewed to basic and acidic residues over residues 50 to 68 and 80 to 90; these read SDAEEQKRQAAAQKRDPRL and PVKKQTKQERR. The segment covering 165-180 has biased composition (acidic residues); that stretch reads DLLADFDDINFDDYKG.

Belongs to the YihI family. As to quaternary structure, interacts with Der.

In terms of biological role, a GTPase-activating protein (GAP) that modifies Der/EngA GTPase function. May play a role in ribosome biogenesis. The polypeptide is Der GTPase-activating protein YihI (Vibrio campbellii (strain ATCC BAA-1116)).